A 429-amino-acid polypeptide reads, in one-letter code: Glutamate-1-semialdehyde 2,1-aminomutase 2 (429 aa).

The residue at position 268 (Lys268) is an N6-(pyridoxal phosphate)lysine.

It belongs to the class-III pyridoxal-phosphate-dependent aminotransferase family. HemL subfamily. As to quaternary structure, homodimer. Pyridoxal 5'-phosphate serves as cofactor.

It is found in the cytoplasm. It catalyses the reaction (S)-4-amino-5-oxopentanoate = 5-aminolevulinate. The protein operates within porphyrin-containing compound metabolism; protoporphyrin-IX biosynthesis; 5-aminolevulinate from L-glutamyl-tRNA(Glu): step 2/2. The sequence is that of Glutamate-1-semialdehyde 2,1-aminomutase 2 from Staphylococcus aureus (strain MRSA252).